The following is an 86-amino-acid chain: Large ribosomal subunit protein bL27 (86 aa).

Residues 1–24 form a disordered region; sequence MATKKAGGSSRNGRDSAGRRLGVK.

Belongs to the bacterial ribosomal protein bL27 family.

This chain is Large ribosomal subunit protein bL27, found in Rickettsia felis (strain ATCC VR-1525 / URRWXCal2) (Rickettsia azadi).